The chain runs to 20 residues: Acidic phospholipase A2 CbIbeta (20 aa).

The protein belongs to the phospholipase A2 family. Group II subfamily. D49 sub-subfamily. In terms of assembly, heterodimer of an acidic subunit (CbIalpha or CbIbeta) and a basic subunit (CbII). The acidic subunit (CbI) is non-toxic, and increases the toxicity of the basic subunit (CbII). The cofactor is Ca(2+). Post-translationally, contains 7 disulfide bonds. In terms of tissue distribution, expressed by the venom gland.

It is found in the secreted. The enzyme catalyses a 1,2-diacyl-sn-glycero-3-phosphocholine + H2O = a 1-acyl-sn-glycero-3-phosphocholine + a fatty acid + H(+). In terms of biological role, heterodimer: presynaptic neurotoxin. Monomer: Snake venom phospholipase A2 (PLA2) is inactive towards micellar phosphatidylcholine but is weakly active towards non-micellar dithiolecithin. PLA2 catalyzes the calcium-dependent hydrolysis of the 2-acyl groups in 3-sn-phosphoglycerides. The protein is Acidic phospholipase A2 CbIbeta of Pseudocerastes fieldi (Field's horned viper).